Here is a 987-residue protein sequence, read N- to C-terminus: Transposase for transposon Tn4430 (987 aa).

The protein belongs to the transposase 7 family.

Its function is as follows. Required for transposition of transposon Tn4430. This chain is Transposase for transposon Tn4430 (tnpA), found in Bacillus thuringiensis.